A 291-amino-acid polypeptide reads, in one-letter code: 4-hydroxy-tetrahydrodipicolinate synthase (291 aa).

Thr44 lines the pyruvate pocket. Residue Tyr132 is the Proton donor/acceptor of the active site. Residue Lys160 is the Schiff-base intermediate with substrate of the active site. A pyruvate-binding site is contributed by Ile202.

Belongs to the DapA family. In terms of assembly, homotetramer; dimer of dimers.

The protein resides in the cytoplasm. It carries out the reaction L-aspartate 4-semialdehyde + pyruvate = (2S,4S)-4-hydroxy-2,3,4,5-tetrahydrodipicolinate + H2O + H(+). The protein operates within amino-acid biosynthesis; L-lysine biosynthesis via DAP pathway; (S)-tetrahydrodipicolinate from L-aspartate: step 3/4. Catalyzes the condensation of (S)-aspartate-beta-semialdehyde [(S)-ASA] and pyruvate to 4-hydroxy-tetrahydrodipicolinate (HTPA). The polypeptide is 4-hydroxy-tetrahydrodipicolinate synthase (Roseobacter denitrificans (strain ATCC 33942 / OCh 114) (Erythrobacter sp. (strain OCh 114))).